Reading from the N-terminus, the 231-residue chain is NADH-quinone oxidoreductase subunit C (231 aa).

This sequence belongs to the complex I 30 kDa subunit family. NDH-1 is composed of 14 different subunits. Subunits NuoB, C, D, E, F, and G constitute the peripheral sector of the complex.

It localises to the cell membrane. The catalysed reaction is a quinone + NADH + 5 H(+)(in) = a quinol + NAD(+) + 4 H(+)(out). Its function is as follows. NDH-1 shuttles electrons from NADH, via FMN and iron-sulfur (Fe-S) centers, to quinones in the respiratory chain. The immediate electron acceptor for the enzyme in this species is believed to be a menaquinone. Couples the redox reaction to proton translocation (for every two electrons transferred, four hydrogen ions are translocated across the cytoplasmic membrane), and thus conserves the redox energy in a proton gradient. The sequence is that of NADH-quinone oxidoreductase subunit C from Mycobacterium sp. (strain JLS).